We begin with the raw amino-acid sequence, 301 residues long: tRNA pseudouridine synthase B (301 aa).

Asp38 acts as the Nucleophile in catalysis.

Belongs to the pseudouridine synthase TruB family. Type 1 subfamily.

It catalyses the reaction uridine(55) in tRNA = pseudouridine(55) in tRNA. Responsible for synthesis of pseudouridine from uracil-55 in the psi GC loop of transfer RNAs. The polypeptide is tRNA pseudouridine synthase B (Lacticaseibacillus paracasei (strain ATCC 334 / BCRC 17002 / CCUG 31169 / CIP 107868 / KCTC 3260 / NRRL B-441) (Lactobacillus paracasei)).